The chain runs to 200 residues: Large ribosomal subunit protein bL25 (200 aa).

Disordered stretches follow at residues 1–20 (MTIEFNATKREGQGSSASRR) and 179–200 (PVVASAQTTRGAAAAEGEGEAA).

Belongs to the bacterial ribosomal protein bL25 family. CTC subfamily. Part of the 50S ribosomal subunit; part of the 5S rRNA/L5/L18/L25 subcomplex. Contacts the 5S rRNA. Binds to the 5S rRNA independently of L5 and L18.

Its function is as follows. This is one of the proteins that binds to the 5S RNA in the ribosome where it forms part of the central protuberance. In Azoarcus sp. (strain BH72), this protein is Large ribosomal subunit protein bL25.